Consider the following 764-residue polypeptide: MAATLKSLKLVRYRAFCSPSAFGAVRSVSYWNVSSTQHGGQDPPEHISLCHSAKKVKNICSTFSSRRILTTSSAHPGLEFSKTSSSKASTLQLGSPRATGVDEEDVEVFDSFENMRVFLQLRPEYRVHSYNASETSQLLSVSEGELILHKVRVNQNNLQAQVIVDYLCKLSSLPAEQHPVLLGSTSFALLCQLSVKKIQLFDTQDLINVLKAFVILGIPHSHSMLDVYETKCCHQVWEMNMDQLLLVADLWRYLGRKVPRFLNIFSSYLNLHWKDLSLSQLVHLIYVIGENRQVSQDLMQKLESLILKYIDLINLEEVGTICLGFFKSSTNLSEFVMRKIGDLACANIQHLSSRSLVNIVKMFRFTHVDHINFMKQIGEIAPQRIPSLGVQGVMHLTLYCSALRFLNEGVMNAVAASLPPRVAHCRSKDVAKILWSFGTLNYKPPNAEEFYSSLISEIHRKMPEFNQYPEHLPTCLLGLAFLEYFPVELIDFALSPGFVRLAQERTKFDLLKELYTLDGTVGIECPDYRGNRLSTHLQQEGSELLWYLAEKDMNSKPEFLETVFLLETMLGGPQYVKHHMILPHTRSSDLEVQLDVNLKPLPFNREATPAENVAKLRLEHVGVSLTDDLMNKLLKGKARGHFQGKTESEPGQQPMELENKAAVPLGGFLCNVADKSGAMEMAGLCPAACMQTPRMKLAVQFTNRNQYCYGSRDLLGLHNMKRRQLARLGYRVVELSYWEWLPLLKRTRLEKLAFLHEKVFTSAL.

A mitochondrion-targeting transit peptide spans 1 to 27 (MAATLKSLKLVRYRAFCSPSAFGAVRS). At Ser95 the chain carries Phosphoserine. The residue at position 507 (Lys507) is an N6-acetyllysine. Residues 697-757 (LAVQFTNRNQ…RLEKLAFLHE (61 aa)) enclose the RAP domain.

It belongs to the FAST kinase family. In terms of assembly, found in a complex with GRSF1, DDX28, DHX30 and FASTKD2. Associates with the 12S mitochondrial rRNA (12S mt-rRNA). As to expression, expression detected in spleen, thymus, testis, ovary, colon, heart, smooth muscle, kidney, brain, lung, liver and white adipose tissue with highest expression in heart, smooth muscle, liver and thyroid.

Its subcellular location is the mitochondrion matrix. It is found in the mitochondrion nucleoid. Its function is as follows. Plays an important role in the processing of non-canonical mitochondrial mRNA precursors. The polypeptide is FAST kinase domain-containing protein 5, mitochondrial (FASTKD5) (Homo sapiens (Human)).